The chain runs to 1193 residues: Pyruvate carboxylase (1193 aa).

Positions 41–493 constitute a Biotin carboxylation domain; that stretch reads QFQKILVANR…WTTFIDDTPE (453 aa). ATP is bound by residues Lys-159, Glu-243, and His-278. The ATP-grasp domain occupies 163–360; the sequence is RQLAIRCNVP…IVAAQIQIAA (198 aa). Residue Arg-335 is part of the active site. The 269-residue stretch at 579-847 folds into the Pyruvate carboxyltransferase domain; sequence CLIMDTTWRD…DPGLNSAHVR (269 aa). Substrate-binding positions include 587–591 and Arg-660; that span reads RDAHQ. Asp-588 contacts a divalent metal cation. A divalent metal cation-binding residues include Lys-756, His-786, and His-788. At Lys-756 the chain carries N6-carboxylysine. Thr-921 contacts substrate. Positions 1116–1191 constitute a Biotinyl-binding domain; that stretch reads KADVGDSSQV…DGQDLVCKIT (76 aa). Lys-1157 is modified (N6-biotinyllysine).

Biotin is required as a cofactor. The cofactor is Zn(2+).

The protein localises to the cytoplasm. The catalysed reaction is hydrogencarbonate + pyruvate + ATP = oxaloacetate + ADP + phosphate + H(+). It participates in carbohydrate biosynthesis; gluconeogenesis. Pyruvate carboxylase catalyzes a 2-step reaction, involving the ATP-dependent carboxylation of the covalently attached biotin in the first step and the transfer of the carboxyl group to pyruvate in the second. The protein is Pyruvate carboxylase (pyc) of Aspergillus terreus.